The following is a 629-amino-acid chain: tRNA uridine 5-carboxymethylaminomethyl modification enzyme MnmG (629 aa).

FAD is bound by residues 13 to 18 (GGGHAG), V125, and S180. 273–287 (GPRYCPSIEDKVMRF) contributes to the NAD(+) binding site. Position 370 (Q370) interacts with FAD.

Belongs to the MnmG family. Homodimer. Heterotetramer of two MnmE and two MnmG subunits. It depends on FAD as a cofactor.

It localises to the cytoplasm. Its function is as follows. NAD-binding protein involved in the addition of a carboxymethylaminomethyl (cmnm) group at the wobble position (U34) of certain tRNAs, forming tRNA-cmnm(5)s(2)U34. The sequence is that of tRNA uridine 5-carboxymethylaminomethyl modification enzyme MnmG from Salmonella schwarzengrund (strain CVM19633).